The sequence spans 265 residues: MEMO1 family protein Mbar_A1422 (265 aa).

This sequence belongs to the MEMO1 family.

The polypeptide is MEMO1 family protein Mbar_A1422 (Methanosarcina barkeri (strain Fusaro / DSM 804)).